Here is a 426-residue protein sequence, read N- to C-terminus: Probable auxin efflux carrier component 9 (426 aa).

Over 1–6 (MITGSE) the chain is Extracellular. Residues 7-27 (VYQVVEAMAPLYTAAALGYGS) traverse the membrane as a helical segment. The Cytoplasmic portion of the chain corresponds to 28 to 38 (VRWLKAFSNEQ). A helical membrane pass occupies residues 39–59 (CAGINHFVALYAVPVLIFDMV). (indol-3-yl)acetate is bound at residue V51. The Extracellular portion of the chain corresponds to 60–70 (STNNVYKMNGR). A helical transmembrane segment spans residues 71–91 (LIAADTLQKAVLLLGLMAWAL). Topologically, residues 92–114 (WERSRARGAGAKAKAAVSSPLQW) are cytoplasmic. Residues 115–135 (VITCFSVASLPNTIIMGVPLL) traverse the membrane as a helical segment. N126 and I128 together coordinate (indol-3-yl)acetate. Topologically, residues 136–145 (NGMYGPVSKD) are extracellular. Residues 146 to 166 (LMKQIVVMQFCIWYNVIIFLY) form a helical membrane-spanning segment. Y159 provides a ligand contact to (indol-3-yl)acetate. Over 167-286 (EYMAARRSAS…LLQIPNTYAS (120 aa)) the chain is Cytoplasmic. Residues 232–258 (RDGVSGETTAAAKEVSSGEVAPVEEEE) form a disordered region. A helical transmembrane segment spans residues 287-307 (FLGLIWSLIAFKCGFSMPKIV). The Extracellular portion of the chain corresponds to 308 to 310 (EDS). Residues 311-331 (LFTIRTTAVGLSMFSSGTFIA) traverse the membrane as a helical segment. Over 332–347 (RQSRFVPCGYKIASFS) the chain is Cytoplasmic. Residues 348-368 (MVIKFLIGPVVMLFASLVIGM) form a helical membrane-spanning segment. Residues 369 to 371 (HGT) lie on the Extracellular side of the membrane. A helical transmembrane segment spans residues 372–392 (LLHIAVVQAALPLAVTSFVYA). Residue V386 participates in (indol-3-yl)acetate binding. The Cytoplasmic segment spans residues 393 to 405 (EEYKVHADIMSTG). Residues 406 to 426 (VILGIFISLPVTIVYYILLGL) form a helical membrane-spanning segment.

Belongs to the auxin efflux carrier (TC 2.A.69.1) family. Homodimer. As to expression, expressed in roots, leaves and shoot apex. Expressed in roots, stem bases, stems, leaves and young panicles.

The protein localises to the membrane. In terms of biological role, may act as a component of the auxin efflux carrier. In Oryza sativa subsp. japonica (Rice), this protein is Probable auxin efflux carrier component 9.